A 118-amino-acid chain; its full sequence is UPF0342 protein BC_0880 (118 aa).

It belongs to the UPF0342 family.

The protein is UPF0342 protein BC_0880 of Bacillus cereus (strain ATCC 14579 / DSM 31 / CCUG 7414 / JCM 2152 / NBRC 15305 / NCIMB 9373 / NCTC 2599 / NRRL B-3711).